Here is a 469-residue protein sequence, read N- to C-terminus: 3-isopropylmalate dehydratase large subunit (469 aa).

3 residues coordinate [4Fe-4S] cluster: Cys-347, Cys-408, and Cys-411.

The protein belongs to the aconitase/IPM isomerase family. LeuC type 1 subfamily. Heterodimer of LeuC and LeuD. [4Fe-4S] cluster is required as a cofactor.

It catalyses the reaction (2R,3S)-3-isopropylmalate = (2S)-2-isopropylmalate. It participates in amino-acid biosynthesis; L-leucine biosynthesis; L-leucine from 3-methyl-2-oxobutanoate: step 2/4. Its function is as follows. Catalyzes the isomerization between 2-isopropylmalate and 3-isopropylmalate, via the formation of 2-isopropylmaleate. This is 3-isopropylmalate dehydratase large subunit from Actinobacillus pleuropneumoniae serotype 5b (strain L20).